Here is a 364-residue protein sequence, read N- to C-terminus: Chorismate synthase (364 aa).

NADP(+) is bound at residue arginine 47. FMN contacts are provided by residues 125-127 (RAS), glycine 288, 303-307 (KPTAT), and arginine 329.

It belongs to the chorismate synthase family. Homotetramer. The cofactor is FMNH2.

It carries out the reaction 5-O-(1-carboxyvinyl)-3-phosphoshikimate = chorismate + phosphate. It participates in metabolic intermediate biosynthesis; chorismate biosynthesis; chorismate from D-erythrose 4-phosphate and phosphoenolpyruvate: step 7/7. Functionally, catalyzes the anti-1,4-elimination of the C-3 phosphate and the C-6 proR hydrogen from 5-enolpyruvylshikimate-3-phosphate (EPSP) to yield chorismate, which is the branch point compound that serves as the starting substrate for the three terminal pathways of aromatic amino acid biosynthesis. This reaction introduces a second double bond into the aromatic ring system. The sequence is that of Chorismate synthase from Synechococcus sp. (strain CC9902).